Here is a 187-residue protein sequence, read N- to C-terminus: Coiled-coil domain-containing protein 201 (187 aa).

2 disordered regions span residues Met1–Thr79 and Lys92–Ala159. Positions Leu111 to Lys131 form a coiled coil. Residues Gly147 to Ala157 are compositionally biased toward basic residues.

This Homo sapiens (Human) protein is Coiled-coil domain-containing protein 201.